Consider the following 391-residue polypeptide: MEPEPQPEPVTLLVKSPNQRHRDLELSGDRSWSVSRLKAHLSRVYPERPRPEDQRLIYSGKLLLDHQCLQDLLPKQEKRHVLHLVCNVKNPSKMPETSTKGAESTEQPDNSNQTQHPGDSSSDGLRQREVLRNLSPSGWENISRPEAVQQTFQGLGPGFSGYTTYGWLQLSWFQQIYARQYYMQYLAATAASGTFVPTPSAQEIPVVSTPAPAPIHNQFPAENQPANQNAAAQAVVNPGANQNLRMNAQGGPLVEEDDEINRDWLDWTYSAATFSVFLSILYFYSSLSRFLMVMGATVVMYLHHVGWFPFRQRPVQNFPDDGGPRDAANQDPNNNLQGGMDPEMEDPNRLPPDREVLDPEHTSPSFMSTAWLVFKTFFASLLPEGPPALAN.

Position 1 is an N-acetylmethionine (Met1). Topologically, residues 1–263 (MEPEPQPEPV…VEEDDEINRD (263 aa)) are cytoplasmic. The 63-residue stretch at 10-72 (VTLLVKSPNQ…LLDHQCLQDL (63 aa)) folds into the Ubiquitin-like domain. The disordered stretch occupies residues 90–126 (NPSKMPETSTKGAESTEQPDNSNQTQHPGDSSSDGLR). The segment covering 95-124 (PETSTKGAESTEQPDNSNQTQHPGDSSSDG) has biased composition (polar residues). The interval 115–200 (QHPGDSSSDG…ASGTFVPTPS (86 aa)) is interaction with UBQLN1. At Ser135 the chain carries Phosphoserine. Residues 264-284 (WLDWTYSAATFSVFLSILYFY) form a helical membrane-spanning segment. Residues 285-289 (SSLSR) lie on the Lumenal side of the membrane. Residues 290–310 (FLMVMGATVVMYLHHVGWFPF) form a helical membrane-spanning segment. Topologically, residues 311–391 (RQRPVQNFPD…LPEGPPALAN (81 aa)) are cytoplasmic. A disordered region spans residues 317-361 (NFPDDGGPRDAANQDPNNNLQGGMDPEMEDPNRLPPDREVLDPEH). The segment covering 346–361 (DPNRLPPDREVLDPEH) has biased composition (basic and acidic residues).

As to quaternary structure, interacts with PSEN1 and PSEN2. Interacts with UBXN6. Interacts with UBQLN1, UBQLN2 and UBQLN4. Component of the HRD1 complex, which comprises at least SYNV1/HRD1, FAM8A1, HERPUD1/HERP, OS9, SEL1L and UBE2J1. FAM8A1 binding to SYNV1 may promote recruitment of HERPUD1 to the HRD1 complex.

It localises to the endoplasmic reticulum membrane. Component of the endoplasmic reticulum quality control (ERQC) system also called ER-associated degradation (ERAD) involved in ubiquitin-dependent degradation of misfolded endoplasmic reticulum proteins. Binds to ubiquilins and this interaction is required for efficient degradation of CD3D via the ERAD pathway. This chain is Homocysteine-responsive endoplasmic reticulum-resident ubiquitin-like domain member 1 protein (Herpud1), found in Mus musculus (Mouse).